Reading from the N-terminus, the 82-residue chain is Sec-independent protein translocase protein TatA (82 aa).

Residues 1–21 (MGLSTTHLIIFLVIIVLIFGT) traverse the membrane as a helical segment.

The protein belongs to the TatA/E family. The Tat system comprises two distinct complexes: a TatABC complex, containing multiple copies of TatA, TatB and TatC subunits, and a separate TatA complex, containing only TatA subunits. Substrates initially bind to the TatABC complex, which probably triggers association of the separate TatA complex to form the active translocon.

Its subcellular location is the cell inner membrane. Functionally, part of the twin-arginine translocation (Tat) system that transports large folded proteins containing a characteristic twin-arginine motif in their signal peptide across membranes. TatA could form the protein-conducting channel of the Tat system. The protein is Sec-independent protein translocase protein TatA of Leptothrix cholodnii (strain ATCC 51168 / LMG 8142 / SP-6) (Leptothrix discophora (strain SP-6)).